Reading from the N-terminus, the 475-residue chain is ATP synthase subunit beta, chloroplastic (475 aa).

Residue 155–162 (GGAGVGKT) coordinates ATP.

It belongs to the ATPase alpha/beta chains family. As to quaternary structure, F-type ATPases have 2 components, CF(1) - the catalytic core - and CF(0) - the membrane proton channel. CF(1) has five subunits: alpha(3), beta(3), gamma(1), delta(1), epsilon(1). CF(0) has four main subunits: a(1), b(1), b'(1) and c(9-12).

Its subcellular location is the plastid. The protein resides in the chloroplast thylakoid membrane. The enzyme catalyses ATP + H2O + 4 H(+)(in) = ADP + phosphate + 5 H(+)(out). Functionally, produces ATP from ADP in the presence of a proton gradient across the membrane. The catalytic sites are hosted primarily by the beta subunits. The protein is ATP synthase subunit beta, chloroplastic of Porphyra purpurea (Red seaweed).